Here is a 117-residue protein sequence, read N- to C-terminus: Large ribosomal subunit protein bL20 (117 aa).

The protein belongs to the bacterial ribosomal protein bL20 family.

Its function is as follows. Binds directly to 23S ribosomal RNA and is necessary for the in vitro assembly process of the 50S ribosomal subunit. It is not involved in the protein synthesizing functions of that subunit. In Thermomicrobium roseum (strain ATCC 27502 / DSM 5159 / P-2), this protein is Large ribosomal subunit protein bL20.